A 122-amino-acid polypeptide reads, in one-letter code: Protein FAM223B (122 aa).

It belongs to the FAM223 family.

The chain is Protein FAM223B (FAM223B) from Homo sapiens (Human).